The following is a 458-amino-acid chain: UDP-N-acetylmuramate--L-alanine ligase (458 aa).

Residue 115-121 (GSHGKTT) coordinates ATP.

The protein belongs to the MurCDEF family.

The protein resides in the cytoplasm. It catalyses the reaction UDP-N-acetyl-alpha-D-muramate + L-alanine + ATP = UDP-N-acetyl-alpha-D-muramoyl-L-alanine + ADP + phosphate + H(+). It functions in the pathway cell wall biogenesis; peptidoglycan biosynthesis. Its function is as follows. Cell wall formation. This Anaeromyxobacter dehalogenans (strain 2CP-1 / ATCC BAA-258) protein is UDP-N-acetylmuramate--L-alanine ligase.